Reading from the N-terminus, the 262-residue chain is Indole-3-glycerol phosphate synthase (262 aa).

This sequence belongs to the TrpC family.

It carries out the reaction 1-(2-carboxyphenylamino)-1-deoxy-D-ribulose 5-phosphate + H(+) = (1S,2R)-1-C-(indol-3-yl)glycerol 3-phosphate + CO2 + H2O. It functions in the pathway amino-acid biosynthesis; L-tryptophan biosynthesis; L-tryptophan from chorismate: step 4/5. The sequence is that of Indole-3-glycerol phosphate synthase from Thiobacillus denitrificans (strain ATCC 25259 / T1).